A 172-amino-acid polypeptide reads, in one-letter code: Protein-export protein SecB (172 aa).

This sequence belongs to the SecB family. As to quaternary structure, homotetramer, a dimer of dimers. One homotetramer interacts with 1 SecA dimer.

It localises to the cytoplasm. Its function is as follows. One of the proteins required for the normal export of preproteins out of the cell cytoplasm. It is a molecular chaperone that binds to a subset of precursor proteins, maintaining them in a translocation-competent state. It also specifically binds to its receptor SecA. In Xylella fastidiosa (strain 9a5c), this protein is Protein-export protein SecB.